A 403-amino-acid chain; its full sequence is Peroxisomal membrane protein PEX13 (403 aa).

The segment covering 1–11 has biased composition (pro residues); it reads MASQPPPPPKP. The segment at 1 to 69 is disordered; it reads MASQPPPPPK…SQQTGSGNLN (69 aa). The Peroxisomal matrix portion of the chain corresponds to 1-134; it reads MASQPPPPPK…SSRGAFQSIE (134 aa). The span at 59–69 shows a compositional bias: polar residues; that stretch reads PSQQTGSGNLN. Residues 135–155 traverse the membrane as a helical segment; the sequence is SIVHAFASVSMMMDATFSAVY. A targeting to peroxisomes region spans residues 145 to 233; the sequence is MMMDATFSAV…EDRAANSAKS (89 aa). The Cytoplasmic segment spans residues 156–174; sequence NSFRAVLDVANHFSRLKIH. A helical transmembrane segment spans residues 175–192; that stretch reads FTKVFSAFALVRTIRYLY. Residues 175–196 are interaction with PEX19; it reads FTKVFSAFALVRTIRYLYRRLQ. The Peroxisomal matrix portion of the chain corresponds to 193–233; sequence RRLQWMIGLRRGLENEDLWAESEGTVACLGAEDRAANSAKS. The chain crosses the membrane as a helical span at residues 234-254; it reads WPIFLFFAVILGGPYLIWKLL. At 255–403 the chain is on the cytoplasmic side; that stretch reads STHSDEVTDS…TGKNGDKQDL (149 aa). Residues 272-336 enclose the SH3 domain; the sequence is DDHVVARAEY…PANYVKILGK (65 aa). Ser-354 is subject to Phosphoserine.

The protein belongs to the peroxin-13 family. In terms of assembly, interacts (via SH3 domain) with PEX14 (via SH3-binding motif); forming the PEX13-PEX14 docking complex. Interacts with PEX19.

It localises to the peroxisome membrane. Functionally, component of the PEX13-PEX14 docking complex, a translocon channel that specifically mediates the import of peroxisomal cargo proteins bound to PEX5 receptor. The PEX13-PEX14 docking complex forms a large import pore which can be opened to a diameter of about 9 nm. Mechanistically, PEX5 receptor along with cargo proteins associates with the PEX14 subunit of the PEX13-PEX14 docking complex in the cytosol, leading to the insertion of the receptor into the organelle membrane with the concomitant translocation of the cargo into the peroxisome matrix. Involved in the import of PTS1- and PTS2-type containing proteins. This is Peroxisomal membrane protein PEX13 (PEX13) from Bos taurus (Bovine).